A 488-amino-acid chain; its full sequence is TOX high mobility group box family member 2 (488 aa).

A required for transcriptional activation region spans residues 76–114 (YEIPPITPPNLPEPSLLHLGDHEASYHSLCHGLTPNGLL). Disordered stretches follow at residues 192 to 258 (RSSI…PQKP), 293 to 328 (WDSL…KQPM), and 363 to 473 (SLLP…ECGI). Low complexity predominate over residues 204-216 (GSKSATPSPSSST). Over residues 222 to 239 (EVHFKISGEKRPSADPGK) the composition is skewed to basic and acidic residues. Positions 223 to 252 (VHFKISGEKRPSADPGKKAKNPKKKKKKDP) match the Nuclear localization signal motif. Over residues 240–250 (KAKNPKKKKKK) the composition is skewed to basic residues. The segment at residues 255–323 (PQKPVSAYAL…QANPPAKMLP (69 aa)) is a DNA-binding region (HMG box). The segment covering 302 to 316 (QSSPDQGETKSTQAN) has biased composition (polar residues). Residues 443-460 (PSSSGSCSPGPSNPTSSG) are compositionally biased toward low complexity.

The protein resides in the nucleus. Functionally, putative transcriptional activator involved in the hypothalamo-pituitary-gonadal system. The sequence is that of TOX high mobility group box family member 2 (TOX2) from Homo sapiens (Human).